The chain runs to 576 residues: Peroxisomal targeting signal receptor (576 aa).

Cysteine 10 is covalently cross-linked (Glycyl cysteine thioester (Cys-Gly) (interchain with G-Cter in ubiquitin)). An amphipathic helix 1 (AH1) region spans residues 11–33; the sequence is AAGSNPLAQFTKHTQHDTSLQQS. Lysine 22 is covalently cross-linked (Glycyl lysine isopeptide (Lys-Gly) (interchain with G-Cter in ubiquitin)). The tract at residues 58 to 75 is amphipathic helix 2 (AH2); sequence RQQMDQFMQQQNNPAFNF. 2 consecutive short sequence motifs (wxxxF/Y motif) follow at residues 100–104 and 128–132; these read WNQEF and WAQDF. A disordered region spans residues 176–195; the sequence is AQMQQQNPAQAQTSEQSQTQ. Residues 196–200 carry the WxxxF/Y motif 3 motif; that stretch reads WEDQF. Residues 224 to 240 are amphipathic helix 4 (AH4); the sequence is FEQVWDDIQVSYADVEL. Residues 249–253 carry the WxxxF/Y motif 4 motif; sequence WEKDF. TPR repeat units follow at residues 278–311, 312–345, 346–383, 384–421, 422–455, 456–489, and 490–523; these read PDAYEIGMRLMESGAKLSEAGLAFEAAVQQDPKH, VDAWLKLGEVQTQNEKESDGIAALEKCLELDPTN, LAALMTLAISYINDGYDNAAYATLERWIETKYPDIASR, ARSSNPDLDGGDRIEQNKRVTELFMKAAQLSPDVASMD, ADVQTGLGVLFYSMEEFDKTIDCFKAAIEVEPDK, ALNWNRLGAALANYNKPEEAVEAYSRALQLNPNF, and VRARYNLGVSFINMGRYKEAVEHLLTGISLHEVE.

The protein belongs to the peroxisomal targeting signal receptor family. As to quaternary structure, interacts (via WxxxF/Y and LVxEF motifs) with PEX14; promoting translocation through the PEX13-PEX14 docking complex. Interacts with PEX8. In terms of processing, a disulfide bond is created between Cys-10 and Cys-338 or Cys-444. Monoubiquitinated at Cys-10 by PEX2 during PEX5 passage through the retrotranslocation channel: monoubiquitination acts as a signal for PEX5 extraction and is required for proper export from peroxisomes and recycling. When PEX5 recycling is compromised, polyubiquitinated at Lys-22 by PEX10 during its passage through the retrotranslocation channel, leading to its degradation.

The protein resides in the peroxisome membrane. It localises to the cytoplasm. The protein localises to the cytosol. It is found in the peroxisome matrix. Functionally, receptor that mediates peroxisomal import of proteins containing a C-terminal PTS1-type tripeptide peroxisomal targeting signal (SKL-type). Binds to cargo proteins containing a PTS1 peroxisomal targeting signal in the cytosol, and translocates them into the peroxisome matrix by passing through the peroxisomal docking complex along with cargo proteins. PEX5 receptor is then retrotranslocated into the cytosol, leading to release of bound cargo in the peroxisome matrix, and reset for a subsequent peroxisome import cycle. Required for PEX7 ubiquitination. In Komagataella phaffii (strain GS115 / ATCC 20864) (Yeast), this protein is Peroxisomal targeting signal receptor.